A 493-amino-acid polypeptide reads, in one-letter code: Serine/threonine-protein kinase PBL34 (493 aa).

Disordered stretches follow at residues 1–42 and 84–117; these read MGLD…EEEE and SKSANEKSNDQPVGQVSSTTTTSNAESSSSTPVI. G2 is lipidated: N-myristoyl glycine. Basic and acidic residues predominate over residues 12-37; it reads WKSEKPKETENKNHKKKNGDDNKSRN. Residues 100–114 show a composition bias toward low complexity; that stretch reads SSTTTTSNAESSSST. T131 carries the phosphothreonine modification. The 287-residue stretch at 142-428 folds into the Protein kinase domain; it reads FRPESLLGEG…VEALKPLPHL (287 aa). Residues 148–156 and K180 each bind ATP; that span reads LGEGGFGCV. Y225 bears the Phosphotyrosine mark. The active-site Proton acceptor is D275. S279 is subject to Phosphoserine. At T306 the chain carries Phosphothreonine. A Phosphoserine modification is found at S309. T310 and T315 each carry phosphothreonine. Y323 is modified (phosphotyrosine). Residues 447 to 493 are disordered; the sequence is KNGSGRSQGFGSRNGQHQPVFRTLSSPHGSSPYRHQIPSPKPKGATT. Residues 450 to 475 are compositionally biased toward polar residues; that stretch reads SGRSQGFGSRNGQHQPVFRTLSSPHG.

It belongs to the protein kinase superfamily. Ser/Thr protein kinase family. As to quaternary structure, interacts with the Xanthomonas campestris effector XopAC/AvrAC. Interacts with SD129. Phosphorylated by SD129 at Thr-306 and Thr-310 in response to the pathogen-associated molecular pattern (PAMP) 3-OH-C10:0, a medium-chain 3-hydroxy fatty acid.

It is found in the cell membrane. It carries out the reaction L-seryl-[protein] + ATP = O-phospho-L-seryl-[protein] + ADP + H(+). It catalyses the reaction L-threonyl-[protein] + ATP = O-phospho-L-threonyl-[protein] + ADP + H(+). Its function is as follows. Involved in chitin-triggered immune signaling and is required for reactive oxygen species (ROS) production. Acts downstream of SD129 in defense signaling triggered by the pathogen-associated molecular pattern (PAMP) 3-OH-C10:0, a medium-chain 3-hydroxy fatty acid. The polypeptide is Serine/threonine-protein kinase PBL34 (Arabidopsis thaliana (Mouse-ear cress)).